We begin with the raw amino-acid sequence, 497 residues long: Xylooligosaccharide oxidase (497 aa).

Residues 1–16 (MHLLPLTVSATAVVSA) form the signal peptide. Cysteines 30 and 79 form a disulfide. Residues asparagine 42 and asparagine 117 are each glycosylated (N-linked (GlcNAc...) asparagine). The FAD-binding PCMH-type domain occupies 57-230 (LPYTPAAIAK…ASFRFKTFAA (174 aa)). Residues 94-155 (HSYASFGLGG…GKRAFSHGTC (62 aa)) constitute a cross-link (6-(S-cysteinyl)-8alpha-(pros-histidyl)-FAD (His-Cys)). Position 154 (threonine 154) interacts with substrate. 3 N-linked (GlcNAc...) asparagine glycosylation sites follow: asparagine 192, asparagine 233, and asparagine 245. Residue arginine 272 participates in substrate binding. Residues asparagine 289 and asparagine 307 are each glycosylated (N-linked (GlcNAc...) asparagine). Positions 412 and 451 each coordinate substrate.

It belongs to the oxygen-dependent FAD-linked oxidoreductase family. Requires FAD as cofactor. Post-translationally, the FAD cofactor is bound via a bicovalent 6-S-cysteinyl, 8alpha-N1-histidyl FAD linkage.

The protein localises to the secreted. The enzyme catalyses D-xylobiose + O2 = D-xylobiono-1,5-lactone + H2O2. It catalyses the reaction D-xylotriose + O2 = D-xylotriono-1,5-lactone + H2O2. The catalysed reaction is D-xylotetraose + O2 = D-xylotetraono-1,5-lactone + H2O2. Catalyzes the selective oxidation of C1 hydroxyl moieties on mono-, oligo- and polysaccharides with concomitant reduction of molecular oxygen to hydrogen peroxide. This results in the formation of the corresponding lactones, which typically undergo spontaneous hydrolysis. Xylooligosaccharide oxidase is able to oxidize a variety of substrates including D-xylose, D-cellobiose, lactose and arabinose. The enzyme acts primarily on xylooligosaccharides, indicating that it prefers pentose-based oligosaccharides over hexose-based oligosaccharides. The chain is Xylooligosaccharide oxidase from Thermothelomyces thermophilus (strain ATCC 42464 / BCRC 31852 / DSM 1799) (Sporotrichum thermophile).